Reading from the N-terminus, the 54-residue chain is Califin-B (54 aa).

A disulfide bridge connects residues cysteine 25 and cysteine 53. Leucine amide is present on leucine 36.

Belongs to the molluscan ELH family. This protein consists of a large 36-residue subunit, bound by a single disulfide-bond to a small 18-residue subunit.

The protein resides in the secreted. In terms of biological role, injected in sexually mature animals califin B excites LB and LC cells of the abdominal ganglion and cause egg-laying. This is Califin-B from Aplysia californica (California sea hare).